We begin with the raw amino-acid sequence, 499 residues long: Aspartyl/glutamyl-tRNA(Asn/Gln) amidotransferase subunit B (499 aa).

The protein belongs to the GatB/GatE family. GatB subfamily. Heterotrimer of A, B and C subunits.

The enzyme catalyses L-glutamyl-tRNA(Gln) + L-glutamine + ATP + H2O = L-glutaminyl-tRNA(Gln) + L-glutamate + ADP + phosphate + H(+). It catalyses the reaction L-aspartyl-tRNA(Asn) + L-glutamine + ATP + H2O = L-asparaginyl-tRNA(Asn) + L-glutamate + ADP + phosphate + 2 H(+). Functionally, allows the formation of correctly charged Asn-tRNA(Asn) or Gln-tRNA(Gln) through the transamidation of misacylated Asp-tRNA(Asn) or Glu-tRNA(Gln) in organisms which lack either or both of asparaginyl-tRNA or glutaminyl-tRNA synthetases. The reaction takes place in the presence of glutamine and ATP through an activated phospho-Asp-tRNA(Asn) or phospho-Glu-tRNA(Gln). The protein is Aspartyl/glutamyl-tRNA(Asn/Gln) amidotransferase subunit B of Bifidobacterium animalis subsp. lactis (strain AD011).